The following is a 320-amino-acid chain: Tyrosine recombinase Synpcc7942_B2651 (320 aa).

Residues valine 16–arginine 106 enclose the Core-binding (CB) domain. Residues arginine 127 to glutamate 313 form the Tyr recombinase domain. Catalysis depends on residues arginine 167, lysine 193, histidine 264, arginine 267, and histidine 291. The active-site O-(3'-phospho-DNA)-tyrosine intermediate is the tyrosine 300.

Belongs to the 'phage' integrase family.

It is found in the cytoplasm. Functionally, site-specific tyrosine recombinase, which acts by catalyzing the cutting and rejoining of the recombining DNA molecules. This is Tyrosine recombinase Synpcc7942_B2651 from Synechococcus elongatus (strain ATCC 33912 / PCC 7942 / FACHB-805) (Anacystis nidulans R2).